Consider the following 212-residue polypeptide: Endothelin-1 (212 aa).

The N-terminal stretch at 1 to 17 (MDYLLMIFSLLFVACQG) is a signal peptide. Positions 18–50 (APETAVLGAELSAVGENGGEKPTPSPPWRLRRS) are excised as a propeptide. 2 cysteine pairs are disulfide-bonded: C53–C67 and C55–C63. A propeptide spanning residues 74–212 (VNTPEHVVPY…RYVTHNRAHW (139 aa)) is cleaved from the precursor. The interval 109-123 (CQCASQKDKKCWNFC) is endothelin-like. 2 stretches are compositionally biased toward basic and acidic residues: residues 168-181 (RSSEEHLRQTRSET) and 189-205 (SFHDPKLKGKPSRERYV). The interval 168–212 (RSSEEHLRQTRSETMRNSVKSSFHDPKLKGKPSRERYVTHNRAHW) is disordered.

This sequence belongs to the endothelin/sarafotoxin family. In terms of tissue distribution, expressed in lung, placental stem villi vessels and in cultured placental vascular smooth muscle cells.

The protein resides in the secreted. Functionally, endothelins are endothelium-derived vasoconstrictor peptides. Probable ligand for G-protein coupled receptors EDNRA and EDNRB which activates PTK2B, BCAR1, BCAR3 and, GTPases RAP1 and RHOA cascade in glomerular mesangial cells. Also binds the DEAR/FBXW7-AS1 receptor. Promotes mesenteric arterial wall remodeling via activation of ROCK signaling and subsequent colocalization of NFATC3 with F-actin filaments. NFATC3 then translocates to the nucleus where it subsequently promotes the transcription of the smooth muscle hypertrophy and differentiation marker ACTA2. The polypeptide is Endothelin-1 (EDN1) (Homo sapiens (Human)).